The primary structure comprises 447 residues: MIKIYDTMTRSLRKFVPLTENTVNMYVCGPTVYNYIHIGNARSAVAFDTIRRYFEYTGYQVNYISNFTDVDDKIIKAATQAGVSPKELSDRFIAAFIEDTKALGVKPATQNPRVMDYIAEIISFVESLIEKDFAYEADGDVYFRVEKSEHYAKLANKTLSELEVGASGRTDAETALKENPLDFALWKSAKAGEVSWDSPWGFGRPGWHIECSVMATEILGDTIDIHGGGADLEFPHHTNEIAQSEAKTGKTFANYWMHNGFVTVDNEKMSKSLGNFVTVHEMLQTVDGQVLRFFLATQQYRKPINFTEKAIHDAEINLKYLKNTLQQPLTETADEQELKQFVIAFQDAMDDDFNTANGITVVFDMAKWINSGSYTEPVKSAFEKMLAVFGIIFEEEVLEVDIEALIAKRQEARANRDFATADAIRDQLAAQGIKLLDTKDGVRWLRD.

Cys28 lines the Zn(2+) pocket. The 'HIGH' region motif lies at 30–40 (PTVYNYIHIGN). Positions 211, 236, and 240 each coordinate Zn(2+). The short motif at 268 to 272 (KMSKS) is the 'KMSKS' region element. Lys271 provides a ligand contact to ATP.

The protein belongs to the class-I aminoacyl-tRNA synthetase family. In terms of assembly, monomer. Zn(2+) is required as a cofactor.

The protein resides in the cytoplasm. It catalyses the reaction tRNA(Cys) + L-cysteine + ATP = L-cysteinyl-tRNA(Cys) + AMP + diphosphate. This is Cysteine--tRNA ligase from Streptococcus pyogenes serotype M18 (strain MGAS8232).